Here is a 162-residue protein sequence, read N- to C-terminus: Endoribonuclease YbeY (162 aa).

Zn(2+) is bound by residues histidine 118, histidine 122, and histidine 128.

The protein belongs to the endoribonuclease YbeY family. Zn(2+) is required as a cofactor.

Its subcellular location is the cytoplasm. Its function is as follows. Single strand-specific metallo-endoribonuclease involved in late-stage 70S ribosome quality control and in maturation of the 3' terminus of the 16S rRNA. The sequence is that of Endoribonuclease YbeY from Glaesserella parasuis serovar 5 (strain SH0165) (Haemophilus parasuis).